The primary structure comprises 1379 residues: DNA-directed RNA polymerase subunit beta (1379 aa).

This sequence belongs to the RNA polymerase beta chain family. As to quaternary structure, the RNAP catalytic core consists of 2 alpha, 1 beta, 1 beta' and 1 omega subunit. When a sigma factor is associated with the core the holoenzyme is formed, which can initiate transcription.

It carries out the reaction RNA(n) + a ribonucleoside 5'-triphosphate = RNA(n+1) + diphosphate. In terms of biological role, DNA-dependent RNA polymerase catalyzes the transcription of DNA into RNA using the four ribonucleoside triphosphates as substrates. This chain is DNA-directed RNA polymerase subunit beta, found in Campylobacter fetus subsp. fetus (strain 82-40).